A 212-amino-acid polypeptide reads, in one-letter code: Cyclin-dependent kinase inhibitor 3 (212 aa).

The segment at 1–24 (MKPPISIQASEFDSSDEEPADDEQ) is disordered. The segment at 1–34 (MKPPISIQASEFDSSDEEPADDEQTPIQISWLPL) is interaction with CDK2. The span at 13-24 (DSSDEEPADDEQ) shows a compositional bias: acidic residues. The Tyrosine-protein phosphatase domain occupies 32–201 (LPLSRVNCSQ…FRDKLAAYLS (170 aa)). Cysteine 140 acts as the Phosphocysteine intermediate in catalysis.

Belongs to the protein-tyrosine phosphatase family. Interacts with cyclin-dependent kinases such as CDK1, CDK2 and CDK3. Does not interact with CDK4. Interacts (via C-terminus) with phosphorylated CDK2 (via C-terminal helix). Interacts with MS4A3 (via C-terminus); the interaction enhances CDKN3 enzymatic activity.

Its subcellular location is the cytoplasm. The protein resides in the perinuclear region. The catalysed reaction is O-phospho-L-tyrosyl-[protein] + H2O = L-tyrosyl-[protein] + phosphate. The enzyme catalyses O-phospho-L-seryl-[protein] + H2O = L-seryl-[protein] + phosphate. It carries out the reaction O-phospho-L-threonyl-[protein] + H2O = L-threonyl-[protein] + phosphate. In terms of biological role, may play a role in cell cycle regulation. Dual specificity phosphatase active toward substrates containing either phosphotyrosine or phosphoserine residues. Dephosphorylates CDK2 at 'Thr-160' in a cyclin-dependent manner. This Rattus norvegicus (Rat) protein is Cyclin-dependent kinase inhibitor 3.